A 424-amino-acid chain; its full sequence is Tyrosine--tRNA ligase (424 aa).

Y37 contributes to the L-tyrosine binding site. The short motif at P42 to S51 is the 'HIGH' region element. Residues Y174 and Q178 each contribute to the L-tyrosine site. The short motif at K234–T238 is the 'KMSKS' region element. K237 contacts ATP. An S4 RNA-binding domain is found at S357–D422.

Belongs to the class-I aminoacyl-tRNA synthetase family. TyrS type 1 subfamily. In terms of assembly, homodimer.

The protein resides in the cytoplasm. The catalysed reaction is tRNA(Tyr) + L-tyrosine + ATP = L-tyrosyl-tRNA(Tyr) + AMP + diphosphate + H(+). Its function is as follows. Catalyzes the attachment of tyrosine to tRNA(Tyr) in a two-step reaction: tyrosine is first activated by ATP to form Tyr-AMP and then transferred to the acceptor end of tRNA(Tyr). The polypeptide is Tyrosine--tRNA ligase (Chromobacterium violaceum (strain ATCC 12472 / DSM 30191 / JCM 1249 / CCUG 213 / NBRC 12614 / NCIMB 9131 / NCTC 9757 / MK)).